A 387-amino-acid polypeptide reads, in one-letter code: Pyrophosphate--fructose 6-phosphate 1-phosphotransferase 3 (387 aa).

Position 15 (Gly-15) interacts with diphosphate. Mg(2+) is bound at residue Asp-114. Substrate contacts are provided by residues 140–142 (TID), 186–188 (MGR), Glu-247, and 308–311 (YELR). Asp-142 serves as the catalytic Proton acceptor.

It belongs to the phosphofructokinase type A (PFKA) family. PPi-dependent PFK group II subfamily. Clade 'Short' sub-subfamily. As to quaternary structure, homotetramer. Mg(2+) serves as cofactor.

It is found in the cytoplasm. It catalyses the reaction beta-D-fructose 6-phosphate + diphosphate = beta-D-fructose 1,6-bisphosphate + phosphate + H(+). It participates in carbohydrate degradation; glycolysis; D-glyceraldehyde 3-phosphate and glycerone phosphate from D-glucose: step 3/4. With respect to regulation, non-allosteric. Its function is as follows. Catalyzes the phosphorylation of D-fructose 6-phosphate, the first committing step of glycolysis. Uses inorganic phosphate (PPi) as phosphoryl donor instead of ATP like common ATP-dependent phosphofructokinases (ATP-PFKs), which renders the reaction reversible, and can thus function both in glycolysis and gluconeogenesis. Consistently, PPi-PFK can replace the enzymes of both the forward (ATP-PFK) and reverse (fructose-bisphosphatase (FBPase)) reactions. The polypeptide is Pyrophosphate--fructose 6-phosphate 1-phosphotransferase 3 (pfk3) (Trichomonas vaginalis (strain ATCC PRA-98 / G3)).